The sequence spans 93 residues: Small ribosomal subunit protein bS18 (93 aa).

It belongs to the bacterial ribosomal protein bS18 family. As to quaternary structure, part of the 30S ribosomal subunit. Forms a tight heterodimer with protein bS6.

Binds as a heterodimer with protein bS6 to the central domain of the 16S rRNA, where it helps stabilize the platform of the 30S subunit. The protein is Small ribosomal subunit protein bS18 of Acidovorax ebreus (strain TPSY) (Diaphorobacter sp. (strain TPSY)).